Here is a 469-residue protein sequence, read N- to C-terminus: 1-aminocyclopropane-1-carboxylate synthase 8 (469 aa).

Substrate contacts are provided by Glu-47 and Tyr-85. Lys-272 is modified (N6-(pyridoxal phosphate)lysine).

This sequence belongs to the class-I pyridoxal-phosphate-dependent aminotransferase family. In terms of assembly, homodimer and heterodimer. In vivo, the relevance of heterodimerization with other ACS enzymes is however unsure. Interacts with GRF3. Pyridoxal 5'-phosphate is required as a cofactor. Post-translationally, may be processed at its C-terminus. As to expression, expressed in roots. Expressed at low level in flowers and siliques.

It catalyses the reaction S-adenosyl-L-methionine = 1-aminocyclopropane-1-carboxylate + S-methyl-5'-thioadenosine + H(+). The protein operates within alkene biosynthesis; ethylene biosynthesis via S-adenosyl-L-methionine; ethylene from S-adenosyl-L-methionine: step 1/2. 1-aminocyclopropane-1-carboxylate synthase (ACS) enzymes catalyze the conversion of S-adenosyl-L-methionine (SAM) into 1-aminocyclopropane-1-carboxylate (ACC), a direct precursor of ethylene. This Arabidopsis thaliana (Mouse-ear cress) protein is 1-aminocyclopropane-1-carboxylate synthase 8 (ACS8).